Here is a 156-residue protein sequence, read N- to C-terminus: ATP synthase subunit b (156 aa).

A helical membrane pass occupies residues 7-29 (LIGQSLTFIAFILFCMKYVWPQL).

The protein belongs to the ATPase B chain family. F-type ATPases have 2 components, F(1) - the catalytic core - and F(0) - the membrane proton channel. F(1) has five subunits: alpha(3), beta(3), gamma(1), delta(1), epsilon(1). F(0) has three main subunits: a(1), b(2) and c(10-14). The alpha and beta chains form an alternating ring which encloses part of the gamma chain. F(1) is attached to F(0) by a central stalk formed by the gamma and epsilon chains, while a peripheral stalk is formed by the delta and b chains.

Its subcellular location is the cell inner membrane. Its function is as follows. F(1)F(0) ATP synthase produces ATP from ADP in the presence of a proton or sodium gradient. F-type ATPases consist of two structural domains, F(1) containing the extramembraneous catalytic core and F(0) containing the membrane proton channel, linked together by a central stalk and a peripheral stalk. During catalysis, ATP synthesis in the catalytic domain of F(1) is coupled via a rotary mechanism of the central stalk subunits to proton translocation. In terms of biological role, component of the F(0) channel, it forms part of the peripheral stalk, linking F(1) to F(0). The sequence is that of ATP synthase subunit b from Saccharophagus degradans (strain 2-40 / ATCC 43961 / DSM 17024).